Here is a 244-residue protein sequence, read N- to C-terminus: Protein FAM168A (244 aa).

Met-1 carries the N-acetylmethionine modification. Residue Arg-102 is modified to Asymmetric dimethylarginine. Residues 107-126 (TPYKVPPTQSNTAPPPYSPS) are disordered.

This sequence belongs to the FAM168 family. As to quaternary structure, interacts with POLB. Interacts with AKT1 and MT1X. May interact with FAM168B.

In cancer context, protects cells from induced-DNA damage and apoptosis. Acts, at least in part, through PI3K/AKT/NFKB signaling pathway and by preventing POLB degradation. Decreases POLB ubiquitation and stabilizes its protein levels. The sequence is that of Protein FAM168A (Fam168a) from Mus musculus (Mouse).